Consider the following 113-residue polypeptide: Hydrogenase maturation factor HypA (113 aa).

A Ni(2+)-binding site is contributed by histidine 2. Zn(2+) contacts are provided by cysteine 73, cysteine 76, cysteine 89, and cysteine 92.

Belongs to the HypA/HybF family.

Functionally, involved in the maturation of [NiFe] hydrogenases. Required for nickel insertion into the metal center of the hydrogenase. The polypeptide is Hydrogenase maturation factor HypA (Xanthobacter autotrophicus (strain ATCC BAA-1158 / Py2)).